The sequence spans 206 residues: Small ribosomal subunit protein uS4 (206 aa).

The region spanning 98–163 (MRLDNVVYRL…SEKFKTFVEN (66 aa)) is the S4 RNA-binding domain.

Belongs to the universal ribosomal protein uS4 family. Part of the 30S ribosomal subunit. Contacts protein S5. The interaction surface between S4 and S5 is involved in control of translational fidelity.

One of the primary rRNA binding proteins, it binds directly to 16S rRNA where it nucleates assembly of the body of the 30S subunit. Functionally, with S5 and S12 plays an important role in translational accuracy. The protein is Small ribosomal subunit protein uS4 of Clostridium botulinum (strain Alaska E43 / Type E3).